We begin with the raw amino-acid sequence, 386 residues long: Acyl-[acyl-carrier-protein] dehydrogenase MbtN (386 aa).

The protein belongs to the acyl-CoA dehydrogenase family. FAD serves as cofactor.

The protein operates within siderophore biosynthesis; mycobactin biosynthesis. In terms of biological role, catalyzes the dehydrogenation at the alpha-beta position of ACP-bound acyl chains. This results in the introduction of a double bond in the lipidic chain, which is further transferred to the epsilon-amino group of lysine residue in the mycobactin core by MbtK. This is Acyl-[acyl-carrier-protein] dehydrogenase MbtN (mbtN) from Mycobacterium bovis (strain ATCC BAA-935 / AF2122/97).